A 149-amino-acid polypeptide reads, in one-letter code: SsrA-binding protein (149 aa).

It belongs to the SmpB family.

It is found in the cytoplasm. Required for rescue of stalled ribosomes mediated by trans-translation. Binds to transfer-messenger RNA (tmRNA), required for stable association of tmRNA with ribosomes. tmRNA and SmpB together mimic tRNA shape, replacing the anticodon stem-loop with SmpB. tmRNA is encoded by the ssrA gene; the 2 termini fold to resemble tRNA(Ala) and it encodes a 'tag peptide', a short internal open reading frame. During trans-translation Ala-aminoacylated tmRNA acts like a tRNA, entering the A-site of stalled ribosomes, displacing the stalled mRNA. The ribosome then switches to translate the ORF on the tmRNA; the nascent peptide is terminated with the 'tag peptide' encoded by the tmRNA and targeted for degradation. The ribosome is freed to recommence translation, which seems to be the essential function of trans-translation. This Wolbachia pipientis subsp. Culex pipiens (strain wPip) protein is SsrA-binding protein.